A 317-amino-acid polypeptide reads, in one-letter code: 3-oxoacyl-[acyl-carrier-protein] reductase 5, chloroplastic (317 aa).

Residues T1 to Q57 constitute a chloroplast transit peptide. Residue V79–V103 coordinates NADP(+). S211 lines the substrate pocket. Y224 acts as the Proton acceptor in catalysis.

Belongs to the short-chain dehydrogenases/reductases (SDR) family. As to quaternary structure, homotetramer.

It is found in the plastid. Its subcellular location is the chloroplast. The catalysed reaction is a (3R)-hydroxyacyl-[ACP] + NADP(+) = a 3-oxoacyl-[ACP] + NADPH + H(+). Its pathway is lipid metabolism; fatty acid biosynthesis. The protein is 3-oxoacyl-[acyl-carrier-protein] reductase 5, chloroplastic (bkr1) of Brassica napus (Rape).